Consider the following 196-residue polypeptide: Holliday junction branch migration complex subunit RuvA (196 aa).

The tract at residues 1–63 (MINKIYGKII…EDEIKLFGFL (63 aa)) is domain I. The domain II stretch occupies residues 64–138 (NVSEREVFEE…GKLVKADELT (75 aa)). Thr-138 is a region of interest (flexible linker). Residues 139-196 (SSVFKFKDLEQSIVNMGFDRKLVVAAIKEIMLIDEFLMLREVEQEQFLFRETLKRLSG) form a domain III region.

This sequence belongs to the RuvA family. In terms of assembly, homotetramer. Forms an RuvA(8)-RuvB(12)-Holliday junction (HJ) complex. HJ DNA is sandwiched between 2 RuvA tetramers; dsDNA enters through RuvA and exits via RuvB. An RuvB hexamer assembles on each DNA strand where it exits the tetramer. Each RuvB hexamer is contacted by two RuvA subunits (via domain III) on 2 adjacent RuvB subunits; this complex drives branch migration. In the full resolvosome a probable DNA-RuvA(4)-RuvB(12)-RuvC(2) complex forms which resolves the HJ.

It is found in the cytoplasm. In terms of biological role, the RuvA-RuvB-RuvC complex processes Holliday junction (HJ) DNA during genetic recombination and DNA repair, while the RuvA-RuvB complex plays an important role in the rescue of blocked DNA replication forks via replication fork reversal (RFR). RuvA specifically binds to HJ cruciform DNA, conferring on it an open structure. The RuvB hexamer acts as an ATP-dependent pump, pulling dsDNA into and through the RuvAB complex. HJ branch migration allows RuvC to scan DNA until it finds its consensus sequence, where it cleaves and resolves the cruciform DNA. This chain is Holliday junction branch migration complex subunit RuvA, found in Borrelia hermsii (strain HS1 / DAH).